Here is a 189-residue protein sequence, read N- to C-terminus: MIIIISGPPGSGKTSVAIKLANELSYKFISAGKIFRDIAQKMGLDIINLNKVAESNFDIDKMVDKKIFEFILSEKNLIIESHIAGWLFREYTNIAIYLWAPLKIRANRIAIRDKISYDQAISQIIKREYMHYKRFNKFYGIDINDLSVFDLVINTSNVDVNNIVKLILTYLSSVSQNPQPLKEKDINDK.

7 to 15 (GPPGSGKTS) is an ATP binding site.

The protein belongs to the cytidylate kinase family. Type 2 subfamily.

The protein resides in the cytoplasm. The catalysed reaction is CMP + ATP = CDP + ADP. The enzyme catalyses dCMP + ATP = dCDP + ADP. This Saccharolobus islandicus (strain L.S.2.15 / Lassen #1) (Sulfolobus islandicus) protein is Cytidylate kinase.